Reading from the N-terminus, the 466-residue chain is 3-isopropylmalate dehydratase large subunit (466 aa).

Residues C347, C407, and C410 each contribute to the [4Fe-4S] cluster site.

The protein belongs to the aconitase/IPM isomerase family. LeuC type 1 subfamily. Heterodimer of LeuC and LeuD. The cofactor is [4Fe-4S] cluster.

It catalyses the reaction (2R,3S)-3-isopropylmalate = (2S)-2-isopropylmalate. It functions in the pathway amino-acid biosynthesis; L-leucine biosynthesis; L-leucine from 3-methyl-2-oxobutanoate: step 2/4. In terms of biological role, catalyzes the isomerization between 2-isopropylmalate and 3-isopropylmalate, via the formation of 2-isopropylmaleate. This Klebsiella pneumoniae subsp. pneumoniae (strain ATCC 700721 / MGH 78578) protein is 3-isopropylmalate dehydratase large subunit.